The primary structure comprises 375 residues: Peptidyl-prolyl cis-trans isomerase D (375 aa).

The PPIase cyclophilin-type domain occupies 7-169 (YFDITIANEP…QAVTISSAGV (163 aa)). 3 TPR repeats span residues 217–250 (AGKL…LDVH), 270–307 (LPLL…PNLS), and 312–345 (GKAL…VPGD).

This sequence belongs to the cyclophilin-type PPIase family. PPIase D subfamily.

The protein localises to the cytoplasm. The catalysed reaction is [protein]-peptidylproline (omega=180) = [protein]-peptidylproline (omega=0). PPIases accelerate the folding of proteins. It catalyzes the cis-trans isomerization of proline imidic peptide bonds in oligopeptides. The polypeptide is Peptidyl-prolyl cis-trans isomerase D (CPR6) (Cryptococcus neoformans var. neoformans serotype D (strain JEC21 / ATCC MYA-565) (Filobasidiella neoformans)).